The sequence spans 738 residues: Transcription activator of gluconeogenesis SMAC_06113 (738 aa).

The interval methionine 1 to proline 65 is disordered. 2 stretches are compositionally biased toward basic and acidic residues: residues alanine 28–glutamate 39 and glycine 51–arginine 64. The zn(2)-C6 fungal-type DNA-binding region spans cysteine 74–cysteine 102. 4 disordered regions span residues serine 255–glycine 278, histidine 328–arginine 404, glycine 530–proline 579, and serine 636–asparagine 673. Polar residues-rich tracts occupy residues threonine 337–proline 351 and glycine 530–serine 540. In terms of domain architecture, PAS spans alanine 475 to glycine 546. Low complexity-rich tracts occupy residues glutamine 568–proline 579 and serine 636–glycine 655.

The protein belongs to the ERT1/acuK family.

The protein resides in the nucleus. Functionally, transcription factor which regulates nonfermentable carbon utilization. Activator of gluconeogenetic genes. This chain is Transcription activator of gluconeogenesis SMAC_06113, found in Sordaria macrospora (strain ATCC MYA-333 / DSM 997 / K(L3346) / K-hell).